The chain runs to 142 residues: Large ribosomal subunit protein uL13 (142 aa).

This sequence belongs to the universal ribosomal protein uL13 family. Part of the 50S ribosomal subunit.

Functionally, this protein is one of the early assembly proteins of the 50S ribosomal subunit, although it is not seen to bind rRNA by itself. It is important during the early stages of 50S assembly. This Trichlorobacter lovleyi (strain ATCC BAA-1151 / DSM 17278 / SZ) (Geobacter lovleyi) protein is Large ribosomal subunit protein uL13.